A 401-amino-acid polypeptide reads, in one-letter code: tRNA-specific 2-thiouridylase MnmA (401 aa).

ATP is bound by residues 13–20 (GLSGGVDS) and Met-39. Positions 99–101 (NPD) are interaction with target base in tRNA. Cys-104 (nucleophile) is an active-site residue. The cysteines at positions 104 and 202 are disulfide-linked. Gly-128 serves as a coordination point for ATP. The tract at residues 152-154 (KDQ) is interaction with tRNA. Catalysis depends on Cys-202, which acts as the Cysteine persulfide intermediate. The interaction with tRNA stretch occupies residues 329–330 (RY).

It belongs to the MnmA/TRMU family.

The protein localises to the cytoplasm. It carries out the reaction S-sulfanyl-L-cysteinyl-[protein] + uridine(34) in tRNA + AH2 + ATP = 2-thiouridine(34) in tRNA + L-cysteinyl-[protein] + A + AMP + diphosphate + H(+). Its function is as follows. Catalyzes the 2-thiolation of uridine at the wobble position (U34) of tRNA, leading to the formation of s(2)U34. The sequence is that of tRNA-specific 2-thiouridylase MnmA from Polaromonas sp. (strain JS666 / ATCC BAA-500).